A 1006-amino-acid chain; its full sequence is Pentatricopeptide repeat-containing protein At1g30610, chloroplastic (1006 aa).

A chloroplast-targeting transit peptide spans 1–40 (MAVTISTNAFVNASLLDESRNSFWRPLFHQPYYNCRRVVR). Disordered regions lie at residues 180-219 (LSKSGESSVTVPEDESFRKRYSKQEYHRSSDTSRGIERGS) and 248-292 (SSVA…IARG). The segment covering 194-219 (ESFRKRYSKQEYHRSSDTSRGIERGS) has biased composition (basic and acidic residues). Residues 254 to 263 (WSNSGESSVT) show a composition bias toward polar residues. The segment covering 265 to 284 (PKDESFRRRYSKQEHHRSSD) has biased composition (basic and acidic residues). PPR repeat units lie at residues 468–502 (TDYTVMRLIHFLGKLGNWRRVLQVIEWLQRQDRYK), 506–536 (IRIIYTTALNVLGKSRRPVEALNVFHAMLLQ), 542–572 (DMVAYRSIAVTLGQAGHIKELFYVIDTMRSP), 592–626 (DVVVYNAVLNACVQRKQWEGAFWVLQQLKQRGQKP), 627–657 (SPVTYGLIMEVMLACEKYNLVHEFFRKMQKS), 661–695 (NALAYRVLVNTLWKEGKSDEAVHTVEDMESRGIVG), 759–789 (LVVTYTGLIQACVDSGNIKNAAYIFDQMKKV), 793–827 (NLVTCNIMLKAYLQGGLFEEARELFQKMSEDGNHI), 840–874 (DTYTFNTMLDTCAEQEKWDDFGYAYREMLRHGYHF), and 875–909 (NAKRHLRMVLEASRAGKEEVMEATWEHMRRSNRIP).

The protein belongs to the PPR family. P subfamily.

The protein localises to the plastid. It localises to the chloroplast. In terms of biological role, may play a role in embryogenesis. This chain is Pentatricopeptide repeat-containing protein At1g30610, chloroplastic (EMB2279), found in Arabidopsis thaliana (Mouse-ear cress).